The primary structure comprises 395 residues: Thyroid hormone receptor beta (395 aa).

The modulating stretch occupies residues 1 to 31 (MSEPAENCSPRWKDEAIQNGYIPSYLDKDEL). Zn(2+)-binding residues include Cys32, Cys35, Cys49, Cys52, Cys70, Cys76, Cys86, and Cys89. NR C4-type zinc fingers lie at residues 32-52 (CVVC…CEGC) and 70-94 (CKYE…FKKC). The segment at residues 32-99 (CVVCGDKATG…RFKKCIAVGM (68 aa)) is a DNA-binding region (nuclear receptor). An NR LBD domain is found at 142–395 (EEWDLIRMVT…PPLFLEVFED (254 aa)). Residues Arg216, Asn265, and His369 each coordinate 3,3',5-triiodo-L-thyronine. Residues Arg216, Asn265, and His369 each contribute to the L-thyroxine site.

It belongs to the nuclear hormone receptor family. NR1 subfamily.

The protein localises to the nucleus. In terms of biological role, nuclear hormone receptor that can act as a repressor or activator of transcription. High affinity receptor for thyroid hormones, including triiodothyronine and thyroxine. The sequence is that of Thyroid hormone receptor beta (thrb) from Paralichthys olivaceus (Bastard halibut).